The sequence spans 146 residues: Hemoglobin subunit beta-1 (146 aa).

In terms of domain architecture, Globin spans 2–146 (GLTAHDRQLI…IADALGKGYH (145 aa)). 2 residues coordinate heme b: H63 and H92.

The protein belongs to the globin family. In terms of assembly, heterotetramer of two alpha chains and two beta chains. In terms of tissue distribution, red blood cells.

Functionally, involved in oxygen transport from the lung to the various peripheral tissues. This is Hemoglobin subunit beta-1 (hbb1) from Xenopus borealis (Kenyan clawed frog).